The chain runs to 201 residues: ADP-ribosylation factor-related protein 1 (201 aa).

Met1 is subject to N-acetylmethionine. GTP-binding positions include 24 to 31 (GLDNAGKT), 75 to 79 (DLGGQ), and 134 to 137 (NKQD).

It belongs to the small GTPase superfamily. Arf family. As to quaternary structure, interacts with SYS1.

It is found in the golgi apparatus. Its subcellular location is the trans-Golgi network. Trans-Golgi-associated GTPase that regulates protein sorting. Controls the targeting of ARL1 and its effector to the trans-Golgi. Required for the lipidation of chylomicrons in the intestine and required for VLDL lipidation in the liver. In Pongo abelii (Sumatran orangutan), this protein is ADP-ribosylation factor-related protein 1 (ARFRP1).